A 210-amino-acid chain; its full sequence is Putative 3-methyladenine DNA glycosylase (210 aa).

The tract at residues S180 to P210 is disordered. The span at A186–A196 shows a compositional bias: low complexity. Residues R201 to P210 are compositionally biased toward basic residues.

It belongs to the DNA glycosylase MPG family.

This is Putative 3-methyladenine DNA glycosylase from Anaeromyxobacter dehalogenans (strain 2CP-1 / ATCC BAA-258).